A 238-amino-acid polypeptide reads, in one-letter code: Probable transcriptional regulatory protein CPn_0573/CP_0176/CPj0573/CpB0595 (238 aa).

Residues 1–20 are disordered; it reads MAGHSKWANTKHRKERADHK. A compositionally biased stretch (basic residues) spans 9–20; the sequence is NTKHRKERADHK.

The protein belongs to the TACO1 family.

It is found in the cytoplasm. This is Probable transcriptional regulatory protein CPn_0573/CP_0176/CPj0573/CpB0595 from Chlamydia pneumoniae (Chlamydophila pneumoniae).